The sequence spans 104 residues: Putative Fis-like DNA-binding protein (104 aa).

The H-T-H motif DNA-binding region spans 80 to 99 (QTKASELLGLNRGTLRKKLK).

It belongs to the transcriptional regulatory Fis family.

The polypeptide is Putative Fis-like DNA-binding protein (Pseudomonas aeruginosa (strain ATCC 15692 / DSM 22644 / CIP 104116 / JCM 14847 / LMG 12228 / 1C / PRS 101 / PAO1)).